We begin with the raw amino-acid sequence, 242 residues long: Biosynthetic peptidoglycan transglycosylase (242 aa).

A helical transmembrane segment spans residues 19–39; the sequence is LMVVLAVFWGGGIALFSVAPV.

It belongs to the glycosyltransferase 51 family.

Its subcellular location is the cell inner membrane. It carries out the reaction [GlcNAc-(1-&gt;4)-Mur2Ac(oyl-L-Ala-gamma-D-Glu-L-Lys-D-Ala-D-Ala)](n)-di-trans,octa-cis-undecaprenyl diphosphate + beta-D-GlcNAc-(1-&gt;4)-Mur2Ac(oyl-L-Ala-gamma-D-Glu-L-Lys-D-Ala-D-Ala)-di-trans,octa-cis-undecaprenyl diphosphate = [GlcNAc-(1-&gt;4)-Mur2Ac(oyl-L-Ala-gamma-D-Glu-L-Lys-D-Ala-D-Ala)](n+1)-di-trans,octa-cis-undecaprenyl diphosphate + di-trans,octa-cis-undecaprenyl diphosphate + H(+). It functions in the pathway cell wall biogenesis; peptidoglycan biosynthesis. Its function is as follows. Peptidoglycan polymerase that catalyzes glycan chain elongation from lipid-linked precursors. The sequence is that of Biosynthetic peptidoglycan transglycosylase from Shigella dysenteriae serotype 1 (strain Sd197).